The sequence spans 301 residues: Acetyl-coenzyme A carboxylase carboxyl transferase subunit beta (301 aa).

The region spanning 25 to 294 is the CoA carboxyltransferase N-terminal domain; that stretch reads LWIKDPSTGE…NSDAPAPQKP (270 aa).

The protein belongs to the AccD/PCCB family. As to quaternary structure, acetyl-CoA carboxylase is a heterohexamer composed of biotin carboxyl carrier protein (AccB), biotin carboxylase (AccC) and two subunits each of ACCase subunit alpha (AccA) and ACCase subunit beta (AccD).

It is found in the cytoplasm. The catalysed reaction is N(6)-carboxybiotinyl-L-lysyl-[protein] + acetyl-CoA = N(6)-biotinyl-L-lysyl-[protein] + malonyl-CoA. It participates in lipid metabolism; malonyl-CoA biosynthesis; malonyl-CoA from acetyl-CoA: step 1/1. In terms of biological role, component of the acetyl coenzyme A carboxylase (ACC) complex. Biotin carboxylase (BC) catalyzes the carboxylation of biotin on its carrier protein (BCCP) and then the CO(2) group is transferred by the transcarboxylase to acetyl-CoA to form malonyl-CoA. In Brucella canis (strain ATCC 23365 / NCTC 10854 / RM-666), this protein is Acetyl-coenzyme A carboxylase carboxyl transferase subunit beta.